A 249-amino-acid chain; its full sequence is MGYLVKLFKLVVWMLVIGLFSIPSLVSYVIFYDTVIPHSVIQYPVYFNYTTGLNFPTAEVRLDHFSIDPRLPGTSLLQIKMPHSPRNSAMGNFMVSVDFQDRNQRSLKQVKRTVLLPHRSPIHEYLKLIVCSPLYFMGILEETDIVNVRLFESETFAKSFNSITTLSVRFSVKNTPAQAIVKIYSKDIEFYEATLAFASKLHGMRWFMYTHKVSAFLVFTSLFWFTGITSTIITYLIVSSTSETKATRR.

Residues 1-10 (MGYLVKLFKL) are Cytoplasmic-facing. Residues 11-31 (VVWMLVIGLFSIPSLVSYVIF) form a helical membrane-spanning segment. Residues 32–212 (YDTVIPHSVI…GMRWFMYTHK (181 aa)) lie on the Lumenal side of the membrane. A helical transmembrane segment spans residues 213 to 233 (VSAFLVFTSLFWFTGITSTII). The Cytoplasmic segment spans residues 234–249 (TYLIVSSTSETKATRR).

Belongs to the seipin family.

It localises to the endoplasmic reticulum membrane. Its function is as follows. Involved in lipid metabolism and lipid droplet (LD) morphology, number, and size. Facilitates initiation of LD formation, and ensures that vectorial budding of LDs from the ER is directed towards the cytoplasm. This Schizosaccharomyces pombe (strain 972 / ATCC 24843) (Fission yeast) protein is Seipin homolog.